The following is a 145-amino-acid chain: Ribosome-binding factor A (145 aa).

Basic residues predominate over residues 1 to 10; sequence MKRPSSHGRR. Disordered regions lie at residues 1-21 and 124-145; these read MKRP…RQLR and DDPK…KDED.

This sequence belongs to the RbfA family. In terms of assembly, monomer. Binds 30S ribosomal subunits, but not 50S ribosomal subunits or 70S ribosomes.

The protein resides in the cytoplasm. In terms of biological role, one of several proteins that assist in the late maturation steps of the functional core of the 30S ribosomal subunit. Associates with free 30S ribosomal subunits (but not with 30S subunits that are part of 70S ribosomes or polysomes). Required for efficient processing of 16S rRNA. May interact with the 5'-terminal helix region of 16S rRNA. In Phenylobacterium zucineum (strain HLK1), this protein is Ribosome-binding factor A.